We begin with the raw amino-acid sequence, 360 residues long: Holliday junction branch migration complex subunit RuvB (360 aa).

Positions 1–46 (MAIKRSGNSDRPAKNPSSTPGTNAPTLLSPTPTHQEKETSEEKIRP) are disordered. Positions 13-205 (AKNPSSTPGT…FGLIQRLRFY (193 aa)) are large ATPase domain (RuvB-L). The segment covering 15–33 (NPSSTPGTNAPTLLSPTPT) has biased composition (polar residues). A compositionally biased stretch (basic and acidic residues) spans 34-46 (HQEKETSEEKIRP). Residues Ile-44, Arg-45, Gly-86, Lys-89, Thr-90, Thr-91, 152-154 (EDY), Arg-195, Tyr-205, and Arg-242 contribute to the ATP site. Thr-90 lines the Mg(2+) pocket. The small ATPAse domain (RuvB-S) stretch occupies residues 206 to 276 (EVDELTLIVL…LASEALDIYQ (71 aa)). The segment at 279–360 (KQGLDWIDRL…LTSEEQLSIF (82 aa)) is head domain (RuvB-H). 2 residues coordinate DNA: Arg-334 and Arg-339.

This sequence belongs to the RuvB family. As to quaternary structure, homohexamer. Forms an RuvA(8)-RuvB(12)-Holliday junction (HJ) complex. HJ DNA is sandwiched between 2 RuvA tetramers; dsDNA enters through RuvA and exits via RuvB. An RuvB hexamer assembles on each DNA strand where it exits the tetramer. Each RuvB hexamer is contacted by two RuvA subunits (via domain III) on 2 adjacent RuvB subunits; this complex drives branch migration. In the full resolvosome a probable DNA-RuvA(4)-RuvB(12)-RuvC(2) complex forms which resolves the HJ.

It localises to the cytoplasm. The enzyme catalyses ATP + H2O = ADP + phosphate + H(+). The RuvA-RuvB-RuvC complex processes Holliday junction (HJ) DNA during genetic recombination and DNA repair, while the RuvA-RuvB complex plays an important role in the rescue of blocked DNA replication forks via replication fork reversal (RFR). RuvA specifically binds to HJ cruciform DNA, conferring on it an open structure. The RuvB hexamer acts as an ATP-dependent pump, pulling dsDNA into and through the RuvAB complex. RuvB forms 2 homohexamers on either side of HJ DNA bound by 1 or 2 RuvA tetramers; 4 subunits per hexamer contact DNA at a time. Coordinated motions by a converter formed by DNA-disengaged RuvB subunits stimulates ATP hydrolysis and nucleotide exchange. Immobilization of the converter enables RuvB to convert the ATP-contained energy into a lever motion, pulling 2 nucleotides of DNA out of the RuvA tetramer per ATP hydrolyzed, thus driving DNA branch migration. The RuvB motors rotate together with the DNA substrate, which together with the progressing nucleotide cycle form the mechanistic basis for DNA recombination by continuous HJ branch migration. Branch migration allows RuvC to scan DNA until it finds its consensus sequence, where it cleaves and resolves cruciform DNA. The chain is Holliday junction branch migration complex subunit RuvB from Rippkaea orientalis (strain PCC 8801 / RF-1) (Cyanothece sp. (strain PCC 8801)).